A 290-amino-acid polypeptide reads, in one-letter code: tRNA(Ile)-lysidine synthase (290 aa).

Residue Ser-12 to Ser-17 coordinates ATP.

It belongs to the tRNA(Ile)-lysidine synthase family.

It is found in the cytoplasm. It catalyses the reaction cytidine(34) in tRNA(Ile2) + L-lysine + ATP = lysidine(34) in tRNA(Ile2) + AMP + diphosphate + H(+). Functionally, ligates lysine onto the cytidine present at position 34 of the AUA codon-specific tRNA(Ile) that contains the anticodon CAU, in an ATP-dependent manner. Cytidine is converted to lysidine, thus changing the amino acid specificity of the tRNA from methionine to isoleucine. The sequence is that of tRNA(Ile)-lysidine synthase from Mycoplasma genitalium (strain ATCC 33530 / DSM 19775 / NCTC 10195 / G37) (Mycoplasmoides genitalium).